A 402-amino-acid chain; its full sequence is 4-hydroxy-3-methylbut-2-en-1-yl diphosphate synthase (ferredoxin) (402 aa).

4 residues coordinate [4Fe-4S] cluster: Cys311, Cys314, Cys345, and Glu352.

Belongs to the IspG family. [4Fe-4S] cluster serves as cofactor.

The enzyme catalyses (2E)-4-hydroxy-3-methylbut-2-enyl diphosphate + 2 oxidized [2Fe-2S]-[ferredoxin] + H2O = 2-C-methyl-D-erythritol 2,4-cyclic diphosphate + 2 reduced [2Fe-2S]-[ferredoxin] + H(+). It functions in the pathway isoprenoid biosynthesis; isopentenyl diphosphate biosynthesis via DXP pathway; isopentenyl diphosphate from 1-deoxy-D-xylulose 5-phosphate: step 5/6. Its function is as follows. Converts 2C-methyl-D-erythritol 2,4-cyclodiphosphate (ME-2,4cPP) into 1-hydroxy-2-methyl-2-(E)-butenyl 4-diphosphate, using ferredoxin I (PetF) as the reducing agent. The chain is 4-hydroxy-3-methylbut-2-en-1-yl diphosphate synthase (ferredoxin) from Thermosynechococcus vestitus (strain NIES-2133 / IAM M-273 / BP-1).